The following is a 319-amino-acid chain: Glycine--tRNA ligase alpha subunit (319 aa).

The tract at residues 290-319 (RQQQPEAPAPGPAAVVGGRDRKDACDVKEG) is disordered. Basic and acidic residues predominate over residues 307–319 (GRDRKDACDVKEG).

It belongs to the class-II aminoacyl-tRNA synthetase family. In terms of assembly, tetramer of two alpha and two beta subunits.

It localises to the cytoplasm. It carries out the reaction tRNA(Gly) + glycine + ATP = glycyl-tRNA(Gly) + AMP + diphosphate. The polypeptide is Glycine--tRNA ligase alpha subunit (Moorella thermoacetica (strain ATCC 39073 / JCM 9320)).